The following is a 387-amino-acid chain: Putative actin-29 (387 aa).

The protein belongs to the actin family.

It is found in the cytoplasm. The protein resides in the cytoskeleton. It carries out the reaction ATP + H2O = ADP + phosphate + H(+). Functionally, actins are highly conserved proteins that are involved in various types of cell motility and are ubiquitously expressed in all eukaryotic cells. Multiple isoforms are involved in various cellular functions such as cytoskeleton structure, cell mobility, chromosome movement and muscle contraction. In Dictyostelium discoideum (Social amoeba), this protein is Putative actin-29 (act29).